Here is a 1187-residue protein sequence, read N- to C-terminus: ATP-dependent DNA helicase MER3 (1187 aa).

A disordered region spans residues 1–41 (MKTKFDRLGTGKRSRPSPNNIDFNDQSATFKRNKKNSRQPS). A compositionally biased stretch (polar residues) spans 16–30 (PSPNNIDFNDQSATF). The region spanning 148 to 322 (PSIYESNENC…WLKTNNELPA (175 aa)) is the Helicase ATP-binding domain. 161–168 (SPTGSGKT) contributes to the ATP binding site. The DEIH box motif lies at 268 to 271 (DEIH). In terms of domain architecture, Helicase C-terminal spans 360–542 (KLIEIIEKHA…NLIEHLAAET (183 aa)). The SEC63 domain occupies 616-922 (STAYGNAMTR…PKLEKIEFSI (307 aa)). Residues 1039–1054 (CFHSCKDKTQCRHLCC) form a C4-type zinc finger. The segment at 1146–1187 (NCPEIIPIDLESSDSYSSNTAASSISDPNGDLDFLGSDIEFE) is disordered. Positions 1158–1171 (SDSYSSNTAASSIS) are enriched in low complexity.

It belongs to the helicase family. SKI2 subfamily. As to quaternary structure, oligomerizes. A divalent metal cation serves as cofactor. Requires Zn(2+) as cofactor.

Its subcellular location is the nucleus. It carries out the reaction Couples ATP hydrolysis with the unwinding of duplex DNA by translocating in the 3'-5' direction.. It catalyses the reaction ATP + H2O = ADP + phosphate + H(+). In terms of biological role, DNA-dependent ATPase and 3'-5' DNA helicase. Required in the control of double strand break transition and crossover during meiosis. ATPase is slightly better stimulated by single-stranded (ss) than double-stranded (ds)DNA. Unwinds Holliday junction (HJ) DNA to Y-DNA and to ssDNA. Efficient unwinding requires 6 nucleotides of 3'-ssDNA; seems to initiate unwinding from blunt ends when they open slightly. Binds HJ, dsDNA, ssDNA and 3'- and 5-overhang DNA. The chain is ATP-dependent DNA helicase MER3 from Saccharomyces cerevisiae (strain ATCC 204508 / S288c) (Baker's yeast).